A 239-amino-acid polypeptide reads, in one-letter code: Large ribosomal subunit protein uL2 (239 aa).

Disordered stretches follow at residues 1–28 and 199–239; these read MGKR…VGPA and SHPH…RRKG. Basic residues predominate over residues 225-239; that stretch reads KVGHIAARRTGRRKG.

The protein belongs to the universal ribosomal protein uL2 family. Part of the 50S ribosomal subunit. Forms a bridge to the 30S subunit in the 70S ribosome.

In terms of biological role, one of the primary rRNA binding proteins. Required for association of the 30S and 50S subunits to form the 70S ribosome, for tRNA binding and peptide bond formation. It has been suggested to have peptidyltransferase activity; this is somewhat controversial. Makes several contacts with the 16S rRNA in the 70S ribosome. This is Large ribosomal subunit protein uL2 from Staphylothermus marinus (strain ATCC 43588 / DSM 3639 / JCM 9404 / F1).